The sequence spans 418 residues: UDP-N-acetylglucosamine 1-carboxyvinyltransferase 1 (418 aa).

22–23 (KN) contributes to the phosphoenolpyruvate binding site. R94 is a binding site for UDP-N-acetyl-alpha-D-glucosamine. C118 (proton donor) is an active-site residue. C118 carries the 2-(S-cysteinyl)pyruvic acid O-phosphothioketal modification. UDP-N-acetyl-alpha-D-glucosamine is bound by residues 123–127 (RPIDL), D306, and I328.

It belongs to the EPSP synthase family. MurA subfamily.

It is found in the cytoplasm. It carries out the reaction phosphoenolpyruvate + UDP-N-acetyl-alpha-D-glucosamine = UDP-N-acetyl-3-O-(1-carboxyvinyl)-alpha-D-glucosamine + phosphate. It functions in the pathway cell wall biogenesis; peptidoglycan biosynthesis. In terms of biological role, cell wall formation. Adds enolpyruvyl to UDP-N-acetylglucosamine. This is UDP-N-acetylglucosamine 1-carboxyvinyltransferase 1 from Clostridium acetobutylicum (strain ATCC 824 / DSM 792 / JCM 1419 / IAM 19013 / LMG 5710 / NBRC 13948 / NRRL B-527 / VKM B-1787 / 2291 / W).